The following is a 599-amino-acid chain: MTELMTQNSALPVWQSQDHQDDPVIAELRNHFGPDAFSVQPTRTGIPVVWVKREQILKVLTFLKKLPKPYVMLYDLHGVDERLRTHRQGLPAADFTVFYHLISIDRNRDIMLKVALSENDLHLPTCTRIFPNANWYERETWEMFGMTFDGHTHLTRIMMPKSWEGHPLRKDYPARATEFDPFVLTKQKEDLEMEGLTFKPEEWGMKRGKDNEDFMFLNLGPNHPSAHGAFRIILQLDGEEIVDCVPDIGYHHRGAEKMGERQSWHSYIPYTDRVEYLGGCVNEMPYVLAVEKLAGIVVPDRVNVIRVMLSELFRINSHLLYISTYIQDVGGMTPVFLAFTDRQKIYDVVEAITGFRMHPAWFRIGGVAHDLPRGWEGLLREFLDWLPKRLDSYVKVALRNSVLRARAEGVAAYGAKEALDWGVTGAALRATGIDFDVRKWRPYSGYENFNFEVPVGDGVSDCYSRVMLKVEEMRQSLRILEQCLNNMPAGPFKADHPLTTPPPKERTLQHIETLITHFLQVSWGPVMPANESFQMIEATKGINSYYLTSDGSTMSYRTRIRTPSFPHLQQIPSVIRGSLVSDLIVYLGSIDFVMSDVDR.

The interval 1 to 189 is NADH dehydrogenase I subunit C; that stretch reads MTELMTQNSA…DPFVLTKQKE (189 aa). The tract at residues 213-599 is NADH dehydrogenase I subunit D; sequence DFMFLNLGPN…IDFVMSDVDR (387 aa).

The protein in the N-terminal section; belongs to the complex I 30 kDa subunit family. This sequence in the C-terminal section; belongs to the complex I 49 kDa subunit family. NDH-1 is composed of 13 different subunits. Subunits NuoB, CD, E, F, and G constitute the peripheral sector of the complex.

The protein localises to the cell inner membrane. The catalysed reaction is a quinone + NADH + 5 H(+)(in) = a quinol + NAD(+) + 4 H(+)(out). In terms of biological role, NDH-1 shuttles electrons from NADH, via FMN and iron-sulfur (Fe-S) centers, to quinones in the respiratory chain. The immediate electron acceptor for the enzyme in this species is believed to be ubiquinone. Couples the redox reaction to proton translocation (for every two electrons transferred, four hydrogen ions are translocated across the cytoplasmic membrane), and thus conserves the redox energy in a proton gradient. The chain is NADH-quinone oxidoreductase subunit C/D from Sodalis glossinidius (strain morsitans).